Consider the following 396-residue polypeptide: Acetate kinase (396 aa).

Residue Asn8 coordinates Mg(2+). ATP is bound at residue Lys15. Arg89 contributes to the substrate binding site. The active-site Proton donor/acceptor is Asp146. ATP-binding positions include 206–210 (HIGNG), 283–285 (DMR), and 331–335 (GVGEN). A Mg(2+)-binding site is contributed by Glu383.

It belongs to the acetokinase family. Homodimer. Mg(2+) serves as cofactor. Requires Mn(2+) as cofactor.

Its subcellular location is the cytoplasm. The catalysed reaction is acetate + ATP = acetyl phosphate + ADP. It functions in the pathway metabolic intermediate biosynthesis; acetyl-CoA biosynthesis; acetyl-CoA from acetate: step 1/2. Its function is as follows. Catalyzes the formation of acetyl phosphate from acetate and ATP. Can also catalyze the reverse reaction. This chain is Acetate kinase, found in Streptococcus pneumoniae serotype 2 (strain D39 / NCTC 7466).